The sequence spans 245 residues: Octanoyltransferase (245 aa).

Residues 54–242 (KTAHEQVWLL…AFEKIFGPTI (189 aa)) form the BPL/LPL catalytic domain. Residues 93 to 100 (RGGEFTYH), 173 to 175 (AIG), and 186 to 188 (GVS) contribute to the substrate site. Residue Cys-204 is the Acyl-thioester intermediate of the active site.

The protein belongs to the LipB family.

It localises to the cytoplasm. The enzyme catalyses octanoyl-[ACP] + L-lysyl-[protein] = N(6)-octanoyl-L-lysyl-[protein] + holo-[ACP] + H(+). The protein operates within protein modification; protein lipoylation via endogenous pathway; protein N(6)-(lipoyl)lysine from octanoyl-[acyl-carrier-protein]: step 1/2. In terms of biological role, catalyzes the transfer of endogenously produced octanoic acid from octanoyl-acyl-carrier-protein onto the lipoyl domains of lipoate-dependent enzymes. Lipoyl-ACP can also act as a substrate although octanoyl-ACP is likely to be the physiological substrate. This chain is Octanoyltransferase, found in Bartonella tribocorum (strain CIP 105476 / IBS 506).